Here is a 340-residue protein sequence, read N- to C-terminus: ATPase GET3 (340 aa).

Residue 35 to 42 participates in ATP binding; that stretch reads KGGVGKTT. Aspartate 64 is a catalytic residue. ATP is bound by residues glutamate 245 and asparagine 272. 2 residues coordinate Zn(2+): cysteine 283 and cysteine 286.

This sequence belongs to the arsA ATPase family. In terms of assembly, homodimer.

It localises to the cytoplasm. The protein localises to the endoplasmic reticulum. In terms of biological role, ATPase required for the post-translational delivery of tail-anchored (TA) proteins to the endoplasmic reticulum. Recognizes and selectively binds the transmembrane domain of TA proteins in the cytosol. This complex then targets to the endoplasmic reticulum by membrane-bound receptors, where the tail-anchored protein is released for insertion. This process is regulated by ATP binding and hydrolysis. ATP binding drives the homodimer towards the closed dimer state, facilitating recognition of newly synthesized TA membrane proteins. ATP hydrolysis is required for insertion. Subsequently, the homodimer reverts towards the open dimer state, lowering its affinity for the membrane-bound receptor, and returning it to the cytosol to initiate a new round of targeting. The sequence is that of ATPase GET3 from Chaetomium globosum (strain ATCC 6205 / CBS 148.51 / DSM 1962 / NBRC 6347 / NRRL 1970) (Soil fungus).